The primary structure comprises 335 residues: Dihydroorotate dehydrogenase (quinone) (335 aa).

FMN-binding positions include 58–62 (AGADK) and Thr-82. Lys-62 is a substrate binding site. Residue 107–111 (NRNGF) participates in substrate binding. FMN is bound by residues Asn-135 and Asn-168. Asn-168 is a binding site for substrate. Catalysis depends on Ser-171, which acts as the Nucleophile. Substrate is bound at residue Asn-173. Residues Lys-213 and Gly-241 each contribute to the FMN site. 242–243 (NT) contacts substrate. FMN contacts are provided by residues Gly-264, Gly-293, and 314–315 (YS).

This sequence belongs to the dihydroorotate dehydrogenase family. Type 2 subfamily. In terms of assembly, monomer. Requires FMN as cofactor.

The protein localises to the cell membrane. It carries out the reaction (S)-dihydroorotate + a quinone = orotate + a quinol. Its pathway is pyrimidine metabolism; UMP biosynthesis via de novo pathway; orotate from (S)-dihydroorotate (quinone route): step 1/1. Functionally, catalyzes the conversion of dihydroorotate to orotate with quinone as electron acceptor. The polypeptide is Dihydroorotate dehydrogenase (quinone) (Actinobacillus pleuropneumoniae serotype 5b (strain L20)).